The sequence spans 710 residues: Solute carrier organic anion transporter family member 3A1 (710 aa).

At M1 the chain carries N-acetylmethionine. Over residues 1–15 (MQGKKPGGSSGGGRS) the composition is skewed to gly residues. Residues 1 to 25 (MQGKKPGGSSGGGRSGELQGDEAQR) are disordered. Residues 1 to 40 (MQGKKPGGSSGGGRSGELQGDEAQRNKKKKKKVSCFSNIK) are Cytoplasmic-facing. The helical transmembrane segment at 41-60 (IFLVSECALMLAQGTVGAYL) threads the bilayer. The Extracellular segment spans residues 61-79 (VSVLTTLERRFNLQSADVG). The chain crosses the membrane as a helical span at residues 80–100 (VIASSFEIGNLALILFVSYFG). The Cytoplasmic portion of the chain corresponds to 101–106 (ARGHRP). Residues 107-131 (RLIGCGGIVMALGALLSALPEFLTH) traverse the membrane as a helical segment. The Extracellular portion of the chain corresponds to 132–174 (QYKYEAGEIRWGAEGRDVCAANGSGGDEGPDPDLICRNRTATN). Residues N153 and N169 are each glycosylated (N-linked (GlcNAc...) asparagine). Residues 175 to 203 (MMYLLLIGAQVLLGIGATPVQPLGVSYID) traverse the membrane as a helical segment. Residues 204–222 (DHVRRKDSSLYIGILFTML) are Cytoplasmic-facing. The chain crosses the membrane as a helical span at residues 223-243 (VFGPACGFILGSFCTKIYVDA). The Extracellular portion of the chain corresponds to 244 to 261 (VFIDTSNLDITPDDPRWI). The helical transmembrane segment at 262 to 286 (GAWWGGFLLCGALLFFSSLLMFGFP) threads the bilayer. The Cytoplasmic portion of the chain corresponds to 287 to 344 (QSLPPHSEPAMESEQAMLSEREYERPKPSNGVLRHPLEPDSSASCFQQLRVIPKVTKH). A helical membrane pass occupies residues 345-366 (LLSNPVFTCIILAACMEIAVVA). Topologically, residues 367-386 (GFAAFLGKYLEQQFNLTTSS) are extracellular. N381 is a glycosylation site (N-linked (GlcNAc...) asparagine). Residues 387 to 410 (ANQLLGMTAIPCACLGIFLGGLLV) form a helical membrane-spanning segment. Topologically, residues 411–414 (KKLS) are cytoplasmic. The helical transmembrane segment at 415 to 438 (LSALGAIRMAMLVNLVSTACYVSF) threads the bilayer. Topologically, residues 439 to 539 (LFLGCDTGPV…PGCQEAFLTF (101 aa)) are extracellular. N457 carries N-linked (GlcNAc...) asparagine glycosylation. Positions 465–513 (LDPYSPCNNNCECQTDSFTPVCGADGITYLSACFAGCNSTNLTGCACLT) constitute a Kazal-like domain. 3 cysteine pairs are disulfide-bonded: C471-C501, C477-C497, and C486-C511. Residues N502, N505, and N519 are each glycosylated (N-linked (GlcNAc...) asparagine). The helical transmembrane segment at 540-562 (LCVMCICSLIGAMAQTPSVIILI) threads the bilayer. Topologically, residues 563 to 571 (RTVSPELKS) are cytoplasmic. The chain crosses the membrane as a helical span at residues 572-597 (YALGVLFLLLRLLGFIPPPLIFGAGI). Over 598-630 (DSTCLFWSTFCGEQGACVLYDNVVYRYLYVSIA) the chain is Extracellular. A helical membrane pass occupies residues 631-648 (IALKSFAFILYTTTWQCL). At 649–705 (RKNYKRYIKNHEGGLSTSEFFASTLTLDNLGRDPVPANQTHRTKFIYNLEDHEWCEN) the chain is on the cytoplasmic side.

This sequence belongs to the organo anion transporter (TC 2.A.60) family. Generally the expression of isoform 1 is higher than that of isoform 2. As to expression, expressed in placental trophoblasts. Expressed in pancreas, kidney, liver, lung, brain, heart, cerebellum, peripheral blood leukocyte, colon, small intestine, ovary, testis, prostate, thyroid, thymus and spleen. Expressed in fetal brain, heart, kidney, liver, lung, skeletal muscle, spleen and pancreas. In testis, detected in spermatogonia at different stages and absent from Sertoli cells. Expressed in the choroid plexus epithelium, at the basolateral membrane. In brain, also very abundant in the gray matter of the frontal cortex, but not associated with neuronal cell bodies. Not detected in the white matter. In terms of tissue distribution, expressed in heart, brain, cerebellum, testis, lung, thyroid, spoleen and liver. In testis, primarily localized to the basal membrane of Sertoli cells and weakly expressed within the tubules. In testis, also present in spermatogonia at different stages. In brain, expressed in the choroid plexus epithelium, at the apical membrane as well as in the subapical intracellular vesicular compartments. In brain, also associated with neuronal bodies and axons in both the gray and the white matters of the frontal cortex.

It is found in the basolateral cell membrane. It localises to the apical cell membrane. Its subcellular location is the basal cell membrane. The catalysed reaction is L-thyroxine(out) = L-thyroxine(in). It carries out the reaction prostaglandin E1(out) = prostaglandin E1(in). The enzyme catalyses prostaglandin E2(out) = prostaglandin E2(in). It catalyses the reaction prostaglandin F2alpha(out) = prostaglandin F2alpha(in). The catalysed reaction is (5Z,8Z,11Z,14Z)-eicosatetraenoate(out) = (5Z,8Z,11Z,14Z)-eicosatetraenoate(in). It carries out the reaction taurocholate(out) = taurocholate(in). The enzyme catalyses glycocholate(out) = glycocholate(in). It catalyses the reaction estrone 3-sulfate(out) = estrone 3-sulfate(in). The catalysed reaction is argipressin(out) = argipressin(in). With respect to regulation, stimulated by extracellular acidic pH. Its function is as follows. Putative organic anion antiporter with apparent broad substrate specificity. Recognizes various substrates including thyroid hormone L-thyroxine, prostanoids such as prostaglandin E1 and E2, bile acids such as taurocholate, glycolate and glycochenodeoxycholate and peptide hormones such as L-arginine vasopressin, likely operating in a tissue-specific manner. The transport mechanism, its electrogenicity and potential tissue-specific counterions remain to be elucidated. This is Solute carrier organic anion transporter family member 3A1 (SLCO3A1) from Homo sapiens (Human).